Here is a 111-residue protein sequence, read N- to C-terminus: MKKRLIGFLVLVPALIMWGITLIESNKKTPVEVLESAWDEFGLFSFEIGITDPAITIGMDQTKSEAKLREYLKDNLSREAKEKYKIYIFKDDTDKLEKEHQEYLKENNLNK.

The signal sequence occupies residues 1–24; it reads MKKRLIGFLVLVPALIMWGITLIE.

The protein is Prophage-derived-like uncharacterized protein YozM (yozM) of Bacillus subtilis (strain 168).